A 625-amino-acid polypeptide reads, in one-letter code: Glyco-Gag protein (625 aa).

Topologically, residues 1 to 66 are cytoplasmic; it reads LGDVSEASGA…SVFRRNRAAR (66 aa). Residues 67–86 traverse the membrane as a helical segment; the sequence is LVCLSIVLSFVCSLLFWTAS. Topologically, residues 87-625 are extracellular; it reads KNMGQTVTTP…PQTSLLTLDD (539 aa). Asn-113 carries an N-linked (GlcNAc...) asparagine; by host glycan. Residues 195 to 305 form a disordered region; it reads PSPTAPILPS…STTSRAFPLR (111 aa). N-linked (GlcNAc...) asparagine; by host glycosylation occurs at Asn-479. Composition is skewed to basic and acidic residues over residues 522-553 and 573-606; these read ETPE…EKER and RQDR…DCPK. Positions 522-625 are disordered; sequence ETPEEREERV…PQTSLLTLDD (104 aa).

Post-translationally, glycosylated by host. Cleaved by host near the middle of the molecule, releasing the c-terminal half containing capsid and nucleoprotein domains op GAG.

It localises to the host cell membrane. Plays a role in viral particle release. Presumably acts by facilitating the fission of the virion bud at the cell surface. May prevent the antiviral activity of murine APOBEC3. The sequence is that of Glyco-Gag protein from AKV murine leukemia virus (AKR (endogenous) murine leukemia virus).